A 222-amino-acid chain; its full sequence is FCS-Like Zinc finger 13 (222 aa).

The FLZ-type zinc finger occupies 149–192 (EFLSSCCLCKKKLQGKDIYMYKGEMGFCSAECRSVQIMNDERQE).

This sequence belongs to the FLZ family. In terms of assembly, interacts with KIN10 and KIN11 via its FLZ-type zinc finger domain. Interacts with KINB1, KINB2, KINB3 and SNF4 via its N-terminal part.

It localises to the nucleus. The protein resides in the cytoplasm. In terms of biological role, may act as an adapter to facilitate the interaction of SnRK1 complex with effector proteins, conferring tissue- and stimulus-type specific differences in the SnRK1 regulation pathway. The polypeptide is FCS-Like Zinc finger 13 (Arabidopsis thaliana (Mouse-ear cress)).